We begin with the raw amino-acid sequence, 384 residues long: Inactive lipoate--protein ligase 2 (384 aa).

The BPL/LPL catalytic domain occupies 79-303 (NESKGNECIF…HIKHIINYKN (225 aa)).

The protein resides in the mitochondrion. Its subcellular location is the plastid. It localises to the apicoplast. Functionally, in the mitochondrion and together with LipL1, involved in the lipoylation of the E2 component of the branched chain alpha-ketoacid dehydrogenase complex BCKDH-E2/BCDH and the E2 component of the alpha -ketoglutarate dehydrogenase complex KDH. LipL1 is responsible for catalysing the activation of lipoate, forming lipoyl-AMP while LipL2 is required but is not capable of catalyzing this reaction. Although its role is unclear, it may catalyze the transfer of lipoyl groups from lipoyl-AMP to BCDH and KDH or act as an effector protein. This is Inactive lipoate--protein ligase 2 from Plasmodium falciparum (isolate 3D7).